Consider the following 446-residue polypeptide: UDP-N-acetylmuramoylalanine--D-glutamate ligase (446 aa).

115–121 (GSNGKST) contacts ATP.

The protein belongs to the MurCDEF family.

The protein resides in the cytoplasm. The enzyme catalyses UDP-N-acetyl-alpha-D-muramoyl-L-alanine + D-glutamate + ATP = UDP-N-acetyl-alpha-D-muramoyl-L-alanyl-D-glutamate + ADP + phosphate + H(+). The protein operates within cell wall biogenesis; peptidoglycan biosynthesis. Functionally, cell wall formation. Catalyzes the addition of glutamate to the nucleotide precursor UDP-N-acetylmuramoyl-L-alanine (UMA). The protein is UDP-N-acetylmuramoylalanine--D-glutamate ligase of Hahella chejuensis (strain KCTC 2396).